The sequence spans 330 residues: GTPase Obg (330 aa).

Residues 1–159 (MHFIDEVKIY…MWIHLSLKLL (159 aa)) form the Obg domain. In terms of domain architecture, OBG-type G spans 160–327 (SDVGLVGLPN…IVKLALETIK (168 aa)). GTP contacts are provided by residues 166 to 173 (GLPNAGKS), 191 to 195 (FTTLV), 212 to 215 (DIPG), 279 to 282 (NKCD), and 308 to 310 (STC). The Mg(2+) site is built by S173 and T193.

The protein belongs to the TRAFAC class OBG-HflX-like GTPase superfamily. OBG GTPase family. In terms of assembly, monomer. Mg(2+) is required as a cofactor.

It localises to the cytoplasm. An essential GTPase which binds GTP, GDP and possibly (p)ppGpp with moderate affinity, with high nucleotide exchange rates and a fairly low GTP hydrolysis rate. Plays a role in control of the cell cycle, stress response, ribosome biogenesis and in those bacteria that undergo differentiation, in morphogenesis control. The protein is GTPase Obg of Rickettsia rickettsii (strain Iowa).